The primary structure comprises 491 residues: Protein SET DOMAIN GROUP 40 (491 aa).

The SET domain occupies 36–278; sequence HSLSVSDFPD…LGEQVLLCYG (243 aa).

This sequence belongs to the class V-like SAM-binding methyltransferase superfamily.

This Arabidopsis thaliana (Mouse-ear cress) protein is Protein SET DOMAIN GROUP 40 (SDG40).